The primary structure comprises 114 residues: Large ribosomal subunit protein uL22 (114 aa).

The protein belongs to the universal ribosomal protein uL22 family. As to quaternary structure, part of the 50S ribosomal subunit.

Functionally, this protein binds specifically to 23S rRNA; its binding is stimulated by other ribosomal proteins, e.g. L4, L17, and L20. It is important during the early stages of 50S assembly. It makes multiple contacts with different domains of the 23S rRNA in the assembled 50S subunit and ribosome. The globular domain of the protein is located near the polypeptide exit tunnel on the outside of the subunit, while an extended beta-hairpin is found that lines the wall of the exit tunnel in the center of the 70S ribosome. The polypeptide is Large ribosomal subunit protein uL22 (Bacillus licheniformis (strain ATCC 14580 / DSM 13 / JCM 2505 / CCUG 7422 / NBRC 12200 / NCIMB 9375 / NCTC 10341 / NRRL NRS-1264 / Gibson 46)).